Reading from the N-terminus, the 401-residue chain is Imidazolonepropionase (401 aa).

Fe(3+) contacts are provided by histidine 66 and histidine 68. Residues histidine 66 and histidine 68 each contribute to the Zn(2+) site. The 4-imidazolone-5-propanoate site is built by arginine 75, tyrosine 138, and histidine 171. Tyrosine 138 provides a ligand contact to N-formimidoyl-L-glutamate. Histidine 236 is a Fe(3+) binding site. Zn(2+) is bound at residue histidine 236. A 4-imidazolone-5-propanoate-binding site is contributed by glutamine 239. Fe(3+) is bound at residue aspartate 311. A Zn(2+)-binding site is contributed by aspartate 311. Positions 313 and 315 each coordinate N-formimidoyl-L-glutamate. Threonine 316 lines the 4-imidazolone-5-propanoate pocket.

The protein belongs to the metallo-dependent hydrolases superfamily. HutI family. Requires Zn(2+) as cofactor. Fe(3+) serves as cofactor.

It localises to the cytoplasm. It carries out the reaction 4-imidazolone-5-propanoate + H2O = N-formimidoyl-L-glutamate. It participates in amino-acid degradation; L-histidine degradation into L-glutamate; N-formimidoyl-L-glutamate from L-histidine: step 3/3. In terms of biological role, catalyzes the hydrolytic cleavage of the carbon-nitrogen bond in imidazolone-5-propanoate to yield N-formimidoyl-L-glutamate. It is the third step in the universal histidine degradation pathway. This chain is Imidazolonepropionase, found in Acinetobacter baumannii (strain ATCC 17978 / DSM 105126 / CIP 53.77 / LMG 1025 / NCDC KC755 / 5377).